We begin with the raw amino-acid sequence, 699 residues long: Elongation factor G (699 aa).

The 283-residue stretch at 10 to 292 (DRTRNIGIMA…AVIDYLPSPT (283 aa)) folds into the tr-type G domain. GTP is bound by residues 19-26 (AHIDAGKT), 90-94 (DTPGH), and 144-147 (NKMD).

This sequence belongs to the TRAFAC class translation factor GTPase superfamily. Classic translation factor GTPase family. EF-G/EF-2 subfamily.

Its subcellular location is the cytoplasm. Its function is as follows. Catalyzes the GTP-dependent ribosomal translocation step during translation elongation. During this step, the ribosome changes from the pre-translocational (PRE) to the post-translocational (POST) state as the newly formed A-site-bound peptidyl-tRNA and P-site-bound deacylated tRNA move to the P and E sites, respectively. Catalyzes the coordinated movement of the two tRNA molecules, the mRNA and conformational changes in the ribosome. The protein is Elongation factor G of Coxiella burnetii (strain Dugway 5J108-111).